The chain runs to 468 residues: Envelope glycoprotein C (468 aa).

An N-terminal signal peptide occupies residues 1–30 (MWLPNLVRFVAVAYLICAGAILTYASGASA). Residues 31–50 (SSSQSTPATPTHTTPNLTTA) show a composition bias toward low complexity. Residues 31–73 (SSSQSTPATPTHTTPNLTTAHGAGSDNTTNANGTESTHSHETT) are disordered. The Virion surface segment spans residues 31–431 (SSSQSTPATP…IVEDRPVLTS (401 aa)). N-linked (GlcNAc...) asparagine; by host glycosylation is found at Asn46, Asn57, Asn62, Asn92, Asn100, Asn131, Asn203, Asn208, and Asn269. Cys76 and Cys93 form a disulfide bridge. 2 consecutive Ig-like domains span residues 220–311 (PLLD…DEVS) and 321–416 (PSVF…DTVV). Intrachain disulfides connect Cys239-Cys301, Cys340-Cys399, and Cys344-Cys373. The helical transmembrane segment at 432 to 451 (IIAVTCGAAALALVVLITAV) threads the bilayer. Residues 452 to 468 (CFYCSKPSQAPYKKSDF) lie on the Cytoplasmic side of the membrane.

The protein belongs to the herpesviridae glycoprotein C family. In terms of assembly, interacts with host complement component C3; this interaction inhibits host immune response by disregulating complement cascade.

It localises to the virion membrane. In terms of biological role, essential for the initial attachment to heparan sulfate moieties of the host cell surface proteoglycans. Also plays a role in host immune evasion by inhibiting the host complement cascade activation. The chain is Envelope glycoprotein C (gC) from Equus caballus (Horse).